Consider the following 958-residue polypeptide: Valine--tRNA ligase (958 aa).

The 'HIGH' region signature appears at 45–55 (PNVTGSLHMGH). The 'KMSKS' region motif lies at 571 to 575 (KMSKS). Lys574 serves as a coordination point for ATP. Positions 892–958 (AAERTRLDKE…EALERLKQAS (67 aa)) form a coiled coil.

Belongs to the class-I aminoacyl-tRNA synthetase family. ValS type 1 subfamily. As to quaternary structure, monomer.

It localises to the cytoplasm. It carries out the reaction tRNA(Val) + L-valine + ATP = L-valyl-tRNA(Val) + AMP + diphosphate. Catalyzes the attachment of valine to tRNA(Val). As ValRS can inadvertently accommodate and process structurally similar amino acids such as threonine, to avoid such errors, it has a 'posttransfer' editing activity that hydrolyzes mischarged Thr-tRNA(Val) in a tRNA-dependent manner. This Bradyrhizobium diazoefficiens (strain JCM 10833 / BCRC 13528 / IAM 13628 / NBRC 14792 / USDA 110) protein is Valine--tRNA ligase.